A 67-amino-acid chain; its full sequence is ATP synthase F(0) complex subunit 8 (67 aa).

A helical transmembrane segment spans residues 8–24; it reads TWFTTVLASSITLFILM. The residue at position 54 (K54) is an N6-acetyllysine; alternate. An N6-succinyllysine; alternate modification is found at K54. K57 bears the N6-acetyllysine mark.

The protein belongs to the ATPase protein 8 family. In terms of assembly, component of the ATP synthase complex composed at least of ATP5F1A/subunit alpha, ATP5F1B/subunit beta, ATP5MC1/subunit c (homooctomer), MT-ATP6/subunit a, MT-ATP8/subunit 8, ATP5ME/subunit e, ATP5MF/subunit f, ATP5MG/subunit g, ATP5MK/subunit k, ATP5MJ/subunit j, ATP5F1C/subunit gamma, ATP5F1D/subunit delta, ATP5F1E/subunit epsilon, ATP5PF/subunit F6, ATP5PB/subunit b, ATP5PD/subunit d, ATP5PO/subunit OSCP. ATP synthase complex consists of a soluble F(1) head domain (subunits alpha(3) and beta(3)) - the catalytic core - and a membrane F(0) domain - the membrane proton channel (subunits c, a, 8, e, f, g, k and j). These two domains are linked by a central stalk (subunits gamma, delta, and epsilon) rotating inside the F1 region and a stationary peripheral stalk (subunits F6, b, d, and OSCP). Interacts with PRICKLE3.

Its subcellular location is the mitochondrion membrane. Subunit 8, of the mitochondrial membrane ATP synthase complex (F(1)F(0) ATP synthase or Complex V) that produces ATP from ADP in the presence of a proton gradient across the membrane which is generated by electron transport complexes of the respiratory chain. ATP synthase complex consist of a soluble F(1) head domain - the catalytic core - and a membrane F(1) domain - the membrane proton channel. These two domains are linked by a central stalk rotating inside the F(1) region and a stationary peripheral stalk. During catalysis, ATP synthesis in the catalytic domain of F(1) is coupled via a rotary mechanism of the central stalk subunits to proton translocation. In vivo, can only synthesize ATP although its ATP hydrolase activity can be activated artificially in vitro. Part of the complex F(0) domain. In Cricetulus griseus (Chinese hamster), this protein is ATP synthase F(0) complex subunit 8.